The following is a 258-amino-acid chain: UPF0246 protein VS_0505 (258 aa).

It belongs to the UPF0246 family.

This chain is UPF0246 protein VS_0505, found in Vibrio atlanticus (strain LGP32) (Vibrio splendidus (strain Mel32)).